A 782-amino-acid polypeptide reads, in one-letter code: U-box domain-containing protein 7 (782 aa).

A U-box domain is found at valine 271 to glutamine 345. ARM repeat units lie at residues glutamate 456 to valine 499, asparagine 502 to aspartate 541, glutamate 542 to threonine 581, serine 583 to serine 623, and glutamate 626 to asparagine 665. Basic and acidic residues predominate over residues glutamate 707 to arginine 729. The segment at glutamate 707–serine 765 is disordered. Positions histidine 739–valine 748 are enriched in polar residues.

It catalyses the reaction S-ubiquitinyl-[E2 ubiquitin-conjugating enzyme]-L-cysteine + [acceptor protein]-L-lysine = [E2 ubiquitin-conjugating enzyme]-L-cysteine + N(6)-ubiquitinyl-[acceptor protein]-L-lysine.. Its pathway is protein modification; protein ubiquitination. In terms of biological role, functions as an E3 ubiquitin ligase. The chain is U-box domain-containing protein 7 (PUB7) from Arabidopsis thaliana (Mouse-ear cress).